A 497-amino-acid polypeptide reads, in one-letter code: Probable cytosol aminopeptidase (497 aa).

Mn(2+) is bound by residues lysine 267 and aspartate 272. Lysine 279 is a catalytic residue. Residues aspartate 290, aspartate 349, and glutamate 351 each coordinate Mn(2+). Residue arginine 353 is part of the active site.

Belongs to the peptidase M17 family. The cofactor is Mn(2+).

Its subcellular location is the cytoplasm. The catalysed reaction is Release of an N-terminal amino acid, Xaa-|-Yaa-, in which Xaa is preferably Leu, but may be other amino acids including Pro although not Arg or Lys, and Yaa may be Pro. Amino acid amides and methyl esters are also readily hydrolyzed, but rates on arylamides are exceedingly low.. The enzyme catalyses Release of an N-terminal amino acid, preferentially leucine, but not glutamic or aspartic acids.. Presumably involved in the processing and regular turnover of intracellular proteins. Catalyzes the removal of unsubstituted N-terminal amino acids from various peptides. The sequence is that of Probable cytosol aminopeptidase from Nitrosomonas eutropha (strain DSM 101675 / C91 / Nm57).